The following is a 340-amino-acid chain: MMKVKVAINGYGTIGKRVADAVSLQDDMEVVGVTKTRPDFEAKLGAKRYPLYVAKPENVELFERAGIEIQGTIEDLLPKADIVVDCSPNKVGAENKAKYYEKAGIKAIFQGGEKKDVAEVSFNALANYDEAVGKSYVRVVSCNTTGLTRLIYMLKTNFSIGRIRATMLRRVVDPKEDKKGLVNGIMPDPVAIPSHHGPDVKTVLPDVDIVTTAFKLPTTLMHVHSLCVEMREAVKAEDVVSALSEEPRIMLISAEDGFTSTAKVIEFARELRLRYDLYENIVWRESIGVDGNDLFVTQAVHQEAIVVPENIDAIRAMFELAEKEESIRKTNESLGIGKVF.

Residues 13-14 and Gly-112 contribute to the NAD(+) site; that span reads TI. 141 to 143 lines the D-glyceraldehyde 3-phosphate pocket; it reads SCN. The active-site Nucleophile is the Cys-142. Arg-170 is a binding site for NAD(+). Position 196 to 197 (196 to 197) interacts with D-glyceraldehyde 3-phosphate; that stretch reads HG. Gln-302 lines the NAD(+) pocket.

This sequence belongs to the glyceraldehyde-3-phosphate dehydrogenase family. As to quaternary structure, homotetramer.

It is found in the cytoplasm. It carries out the reaction D-glyceraldehyde 3-phosphate + phosphate + NADP(+) = (2R)-3-phospho-glyceroyl phosphate + NADPH + H(+). It catalyses the reaction D-glyceraldehyde 3-phosphate + phosphate + NAD(+) = (2R)-3-phospho-glyceroyl phosphate + NADH + H(+). The protein operates within carbohydrate degradation; glycolysis; pyruvate from D-glyceraldehyde 3-phosphate: step 1/5. The protein is Glyceraldehyde-3-phosphate dehydrogenase (gap) of Archaeoglobus fulgidus (strain ATCC 49558 / DSM 4304 / JCM 9628 / NBRC 100126 / VC-16).